Consider the following 246-residue polypeptide: tRNA (guanine-N(1)-)-methyltransferase (246 aa).

S-adenosyl-L-methionine contacts are provided by residues glycine 114 and 134 to 139; that span reads IGDYIL. Positions 219–231 are enriched in basic and acidic residues; that stretch reads LRRPDLWERHEGA. Positions 219-246 are disordered; the sequence is LRRPDLWERHEGARAQSPSGARRQKKER.

This sequence belongs to the RNA methyltransferase TrmD family. In terms of assembly, homodimer.

Its subcellular location is the cytoplasm. The enzyme catalyses guanosine(37) in tRNA + S-adenosyl-L-methionine = N(1)-methylguanosine(37) in tRNA + S-adenosyl-L-homocysteine + H(+). Functionally, specifically methylates guanosine-37 in various tRNAs. The chain is tRNA (guanine-N(1)-)-methyltransferase from Rhizorhabdus wittichii (strain DSM 6014 / CCUG 31198 / JCM 15750 / NBRC 105917 / EY 4224 / RW1) (Sphingomonas wittichii).